The following is a 631-amino-acid chain: 1-deoxy-D-xylulose-5-phosphate synthase (631 aa).

Thiamine diphosphate is bound by residues H76 and 117 to 119 (AHS). D148 is a Mg(2+) binding site. Thiamine diphosphate contacts are provided by residues 149–150 (GA), N177, Y284, and E365. N177 lines the Mg(2+) pocket.

It belongs to the transketolase family. DXPS subfamily. As to quaternary structure, homodimer. Mg(2+) serves as cofactor. The cofactor is thiamine diphosphate.

The catalysed reaction is D-glyceraldehyde 3-phosphate + pyruvate + H(+) = 1-deoxy-D-xylulose 5-phosphate + CO2. It functions in the pathway metabolic intermediate biosynthesis; 1-deoxy-D-xylulose 5-phosphate biosynthesis; 1-deoxy-D-xylulose 5-phosphate from D-glyceraldehyde 3-phosphate and pyruvate: step 1/1. Catalyzes the acyloin condensation reaction between C atoms 2 and 3 of pyruvate and glyceraldehyde 3-phosphate to yield 1-deoxy-D-xylulose-5-phosphate (DXP). In Methylibium petroleiphilum (strain ATCC BAA-1232 / LMG 22953 / PM1), this protein is 1-deoxy-D-xylulose-5-phosphate synthase.